The following is a 73-amino-acid chain: MAKKDGAIEVEGRVIEPLPNAMFRIELENGHKVLAHISGKMRQHYIRILPEDRVVVELSPYDLSRGRIVYRYK.

Residues 1–73 form the S1-like domain; that stretch reads MAKKDGAIEV…SRGRIVYRYK (73 aa).

Belongs to the IF-1 family. As to quaternary structure, component of the 30S ribosomal translation pre-initiation complex which assembles on the 30S ribosome in the order IF-2 and IF-3, IF-1 and N-formylmethionyl-tRNA(fMet); mRNA recruitment can occur at any time during PIC assembly.

It is found in the cytoplasm. Functionally, one of the essential components for the initiation of protein synthesis. Stabilizes the binding of IF-2 and IF-3 on the 30S subunit to which N-formylmethionyl-tRNA(fMet) subsequently binds. Helps modulate mRNA selection, yielding the 30S pre-initiation complex (PIC). Upon addition of the 50S ribosomal subunit IF-1, IF-2 and IF-3 are released leaving the mature 70S translation initiation complex. The chain is Translation initiation factor IF-1 from Mycolicibacterium smegmatis (strain ATCC 700084 / mc(2)155) (Mycobacterium smegmatis).